The primary structure comprises 296 residues: Nucleotide-binding protein Rmet_0297 (296 aa).

Gly-8–Ser-15 provides a ligand contact to ATP. Asp-57–Ser-60 is a GTP binding site.

It belongs to the RapZ-like family.

Displays ATPase and GTPase activities. The protein is Nucleotide-binding protein Rmet_0297 of Cupriavidus metallidurans (strain ATCC 43123 / DSM 2839 / NBRC 102507 / CH34) (Ralstonia metallidurans).